The sequence spans 358 residues: G-protein coupled receptor 62 (358 aa).

Residues Met-1 to Gly-17 lie on the Extracellular side of the membrane. N-linked (GlcNAc...) asparagine glycosylation occurs at Asn-3. A helical transmembrane segment spans residues Phe-18–Val-38. At Val-39 to His-53 the chain is on the cytoplasmic side. A helical membrane pass occupies residues Leu-54–Pro-74. Residues Pro-75–Ala-89 lie on the Extracellular side of the membrane. A helical membrane pass occupies residues Ala-90–Leu-110. Residues Ala-111–Pro-128 are Cytoplasmic-facing. The chain crosses the membrane as a helical span at residues Ala-129–Gly-149. Topologically, residues Pro-150–Ala-176 are extracellular. A helical transmembrane segment spans residues Met-177–Val-197. The Cytoplasmic portion of the chain corresponds to Ala-198 to Lys-234. The helical transmembrane segment at Ala-235 to Cys-255 threads the bilayer. Residues Ala-256 to Glu-268 are Extracellular-facing. Residues Ala-269–Leu-289 traverse the membrane as a helical segment. Topologically, residues Gln-290–Thr-358 are cytoplasmic. The disordered stretch occupies residues Val-334–Thr-358.

Belongs to the G-protein coupled receptor 1 family. In terms of assembly, homodimer. Forms heterodimer with MTNR1B. Interacts with ARRB1 and ARRB2 in a spontaneous and agonist-independent manner; leading to the internalization of GPR62 in the endosomal compartment. In terms of tissue distribution, expressed in the brain and testes. Expressed widely, in the brain, including the cerebral cortex, cerebellum, hippocampus,thalamus and pituitary gland. In the testes, expressed specifically in the germ cells.

The protein resides in the cell membrane. It localises to the endosome membrane. In terms of biological role, orphan G-protein coupled receptor. Constitutively activates the G(q/11)/inositol phosphate and the G(s)-alpha/cAMP signaling pathways. Has spontaneous activity for beta-arrestin recruitment. Shows a reciprocal regulatory interaction with the melatonin receptor MTNR1B most likely through receptor heteromerization. In Mus musculus (Mouse), this protein is G-protein coupled receptor 62 (Gpr62).